Reading from the N-terminus, the 259-residue chain is Deoxyribose-phosphate aldolase (259 aa).

Catalysis depends on D102, which acts as the Proton donor/acceptor. K167 functions as the Schiff-base intermediate with acetaldehyde in the catalytic mechanism. The active-site Proton donor/acceptor is K201.

Belongs to the DeoC/FbaB aldolase family. DeoC type 2 subfamily.

It localises to the cytoplasm. The enzyme catalyses 2-deoxy-D-ribose 5-phosphate = D-glyceraldehyde 3-phosphate + acetaldehyde. The protein operates within carbohydrate degradation; 2-deoxy-D-ribose 1-phosphate degradation; D-glyceraldehyde 3-phosphate and acetaldehyde from 2-deoxy-alpha-D-ribose 1-phosphate: step 2/2. Functionally, catalyzes a reversible aldol reaction between acetaldehyde and D-glyceraldehyde 3-phosphate to generate 2-deoxy-D-ribose 5-phosphate. This Enterobacter sp. (strain 638) protein is Deoxyribose-phosphate aldolase.